We begin with the raw amino-acid sequence, 132 residues long: Small ribosomal subunit protein uS8 (132 aa).

Belongs to the universal ribosomal protein uS8 family. Part of the 30S ribosomal subunit. Contacts proteins S5 and S12.

Its function is as follows. One of the primary rRNA binding proteins, it binds directly to 16S rRNA central domain where it helps coordinate assembly of the platform of the 30S subunit. This Natranaerobius thermophilus (strain ATCC BAA-1301 / DSM 18059 / JW/NM-WN-LF) protein is Small ribosomal subunit protein uS8.